Here is a 671-residue protein sequence, read N- to C-terminus: MSEFQLVTRFEPAGDQPEAIRQLVEGIDAGLAHQTLLGVTGSGKTFSIANVISQIKRPTLVLAPNKTLAAQLYGEFKAFFPNNAVEYFVSYYDYYQPEAYVPSSDTFIEKDASINDHIEQMRLSATKALLERKDAIIVTTVSCIYGLGSPETYLRMVMHIDRGDKLDQRALLRRLADLQYTRNDMDFARATFRVRGDVIDIYPAESDLEAIRVELFDDEVESLSAFDPLTGEVIRKLPRFTFYPKSHYVTPRETLIEAMENIKVELQERLEYLRSQNKLVEAQRLEQRTRFDLEMMLELGYCNGIENYSRYLSGRPSGAPPPTLFDYLPPDALLVIDESHVSVPQVGAMYKGDRSRKETLVEYGFRLPSALDNRPMRFDEWEAISPQTIFVSATPGNYEAEHAGRIVEQVVRPTGLVDPQIEIRPALTQVDDLLSEIHKRAALEERVLVTTLTKRMSEDLTDYLSDHGVRVRYLHSDIDTVERVEIIRDLRLGTFDVLVGINLLREGLDMPEVSLVAILDADKEGFLRSDRSLIQTIGRAARNLNGRAILYADRITGSMERAIGETERRREKQIAFNLEHGITPKGVFKDVADIMEGATVPGSRSKKRKGMAKAAEENARYENELRSPSEINKRIRQLEEKMYQLARDLEFEAAAQMRDEIGKLRERLLAV.

A Helicase ATP-binding domain is found at 25–412 (EGIDAGLAHQ…AGRIVEQVVR (388 aa)). 38–45 (GVTGSGKT) provides a ligand contact to ATP. The short motif at 91-114 (YYDYYQPEAYVPSSDTFIEKDASI) is the Beta-hairpin element. The Helicase C-terminal domain maps to 429 to 582 (QVDDLLSEIH…QIAFNLEHGI (154 aa)). Positions 601 to 624 (PGSRSKKRKGMAKAAEENARYENE) are disordered. The segment covering 614 to 624 (AAEENARYENE) has biased composition (basic and acidic residues). Positions 632–667 (NKRIRQLEEKMYQLARDLEFEAAAQMRDEIGKLRER) constitute a UVR domain.

It belongs to the UvrB family. In terms of assembly, forms a heterotetramer with UvrA during the search for lesions. Interacts with UvrC in an incision complex.

Its subcellular location is the cytoplasm. Functionally, the UvrABC repair system catalyzes the recognition and processing of DNA lesions. A damage recognition complex composed of 2 UvrA and 2 UvrB subunits scans DNA for abnormalities. Upon binding of the UvrA(2)B(2) complex to a putative damaged site, the DNA wraps around one UvrB monomer. DNA wrap is dependent on ATP binding by UvrB and probably causes local melting of the DNA helix, facilitating insertion of UvrB beta-hairpin between the DNA strands. Then UvrB probes one DNA strand for the presence of a lesion. If a lesion is found the UvrA subunits dissociate and the UvrB-DNA preincision complex is formed. This complex is subsequently bound by UvrC and the second UvrB is released. If no lesion is found, the DNA wraps around the other UvrB subunit that will check the other stand for damage. The chain is UvrABC system protein B from Pseudomonas syringae pv. syringae (strain B728a).